The following is a 465-amino-acid chain: Adenosylhomocysteinase (465 aa).

3 residues coordinate substrate: Thr-56, Asp-131, and Glu-191. NAD(+) is bound at residue 192 to 194; the sequence is TTT. Residues Lys-221 and Asp-225 each coordinate substrate. NAD(+) contacts are provided by residues Asn-226, 255–260, Glu-278, Asn-313, 334–336, and Asn-379; these read GYGDVG and IGH.

It belongs to the adenosylhomocysteinase family. NAD(+) serves as cofactor.

The protein localises to the cytoplasm. It carries out the reaction S-adenosyl-L-homocysteine + H2O = L-homocysteine + adenosine. The protein operates within amino-acid biosynthesis; L-homocysteine biosynthesis; L-homocysteine from S-adenosyl-L-homocysteine: step 1/1. In terms of biological role, may play a key role in the regulation of the intracellular concentration of adenosylhomocysteine. In Chelativorans sp. (strain BNC1), this protein is Adenosylhomocysteinase.